Reading from the N-terminus, the 378-residue chain is Chorismate synthase (378 aa).

Residue Arg-50 participates in NADP(+) binding. Residues 127–129 (RAS), 255–256 (NA), Gly-300, 315–319 (KPTPS), and Arg-342 each bind FMN.

This sequence belongs to the chorismate synthase family. FMNH2 serves as cofactor.

It catalyses the reaction 5-O-(1-carboxyvinyl)-3-phosphoshikimate = chorismate + phosphate. It participates in metabolic intermediate biosynthesis; chorismate biosynthesis; chorismate from D-erythrose 4-phosphate and phosphoenolpyruvate: step 7/7. In terms of biological role, catalyzes the anti-1,4-elimination of the C-3 phosphate and the C-6 proR hydrogen from 5-enolpyruvylshikimate-3-phosphate (EPSP) to yield chorismate, which is the branch point compound that serves as the starting substrate for the three terminal pathways of aromatic amino acid biosynthesis. This reaction introduces a second double bond into the aromatic ring system. The protein is Chorismate synthase of Methanocaldococcus jannaschii (strain ATCC 43067 / DSM 2661 / JAL-1 / JCM 10045 / NBRC 100440) (Methanococcus jannaschii).